The primary structure comprises 167 residues: Peptidyl-prolyl cis-trans isomerase-like 3 (167 aa).

The region spanning methionine 1 to isoleucine 160 is the PPIase cyclophilin-type domain.

The protein belongs to the cyclophilin-type PPIase family. PPIL3 subfamily.

It catalyses the reaction [protein]-peptidylproline (omega=180) = [protein]-peptidylproline (omega=0). In terms of biological role, PPIases accelerate the folding of proteins. It catalyzes the cis-trans isomerization of proline imidic peptide bonds in oligopeptides. This chain is Peptidyl-prolyl cis-trans isomerase-like 3 (CYP10), found in Gibberella zeae (strain ATCC MYA-4620 / CBS 123657 / FGSC 9075 / NRRL 31084 / PH-1) (Wheat head blight fungus).